The chain runs to 123 residues: uncharacterized protein (123 aa).

This is an uncharacterized protein from Bacillus subtilis (strain 168).